The chain runs to 217 residues: Thymidylate kinase (217 aa).

Residue 7–14 (GIDGAGKS) coordinates ATP.

Belongs to the thymidylate kinase family.

The enzyme catalyses dTMP + ATP = dTDP + ADP. Functionally, phosphorylation of dTMP to form dTDP in both de novo and salvage pathways of dTTP synthesis. The protein is Thymidylate kinase of Pelodictyon phaeoclathratiforme (strain DSM 5477 / BU-1).